The primary structure comprises 288 residues: Syntaxin-1A (288 aa).

Residues 1–265 (MKDRTQELRT…KYQSKARRKK (265 aa)) are Cytoplasmic-facing. Ser-14, Ser-64, and Ser-95 each carry phosphoserine. Positions 68 to 109 (DEKTKEELEELMSDIKKTANKVRSKLKSIEQSIEQEEGLNRS) form a coiled coil. Phosphoserine; by DAPK1 is present on Ser-188. The t-SNARE coiled-coil homology domain occupies 192 to 254 (LSEIETRHSE…ERAVSDTKKA (63 aa)). Residues Lys-252, Lys-253, and Lys-256 each participate in a glycyl lysine isopeptide (Lys-Gly) (interchain with G-Cter in SUMO) cross-link. The helical; Anchor for type IV membrane protein transmembrane segment at 266–286 (IMIIICCVILGIVIASTVGGI) threads the bilayer. Residues 287 to 288 (FA) lie on the Extracellular side of the membrane.

This sequence belongs to the syntaxin family. Part of the SNARE core complex containing SNAP25, VAMP2 and STX1A; this complex constitutes the basic catalytic machinery of the complex neurotransmitter release apparatus. The SNARE complex interacts with CPLX1. Interacts with STXBP1. The interaction with STXBP1 promotes assembly of the SNARE complex. Interacts (via C-terminus) with KCNB1 (via C-terminus); the interaction increases in a calcium-dependent manner and induces a pore-independent enhancement of exocytosis in neuroendocrine cells, chromaffin cells, pancreatic beta cells and from the soma of dorsal root ganglia (DRG) neurons. Interacts with SYTL4. Interacts with STXBP6. Interacts with PLCL1 (via C2 domain). Interacts with OTOF. Interacts with LGI3. Interacts (via the H3 domain) with SLC6A4 (via the N-terminus); this interaction regulates SLC4A6 channel conductance in thalamocortical neurons. Interacts with SYT6 and SYT8; the interaction is Ca(2+)-dependent. Interacts with VAMP8. Interacts with SNAP23. Interacts with VAPA and SYBU. Interacts with PRRT2. Interacts with SEPT8. Interacts with STXBP5L. Interacts with synaptotagmin-1/SYT1. Interacts with SEPTIN5; in the cerebellar cortex. Interacts with SEPTIN4; in the striatum. Phosphorylated by CK2. Phosphorylation at Ser-188 by DAPK1 significantly decreases its interaction with STXBP1. Post-translationally, sumoylated, sumoylation is required for regulation of synaptic vesicle endocytosis. In terms of tissue distribution, highly expressed in embryonic spinal cord and ganglia and in adult cerebellum and cerebral cortex. As to expression, expressed in heart, liver, fat, skeletal muscle, kidney and brain.

It is found in the cytoplasmic vesicle. The protein resides in the secretory vesicle. Its subcellular location is the synaptic vesicle membrane. The protein localises to the synapse. It localises to the synaptosome. It is found in the cell membrane. The protein resides in the secreted. Its function is as follows. Plays an essential role in hormone and neurotransmitter calcium-dependent exocytosis and endocytosis. Part of the SNARE (Soluble NSF Attachment Receptor) complex composed of SNAP25, STX1A and VAMP2 which mediates the fusion of synaptic vesicles with the presynaptic plasma membrane. STX1A and SNAP25 are localized on the plasma membrane while VAMP2 resides in synaptic vesicles. The pairing of the three SNAREs from the N-terminal SNARE motifs to the C-terminal anchors leads to the formation of the SNARE complex, which brings membranes into close proximity and results in final fusion. Participates in the calcium-dependent regulation of acrosomal exocytosis in sperm. Also plays an important role in the exocytosis of hormones such as insulin or glucagon-like peptide 1 (GLP-1). This Homo sapiens (Human) protein is Syntaxin-1A (STX1A).